The primary structure comprises 38 residues: Photosystem II reaction center protein L (38 aa).

A helical transmembrane segment spans residues 17–37 (SLYWGLLLIFVLAILFSNYIF).

It belongs to the PsbL family. In terms of assembly, PSII is composed of 1 copy each of membrane proteins PsbA, PsbB, PsbC, PsbD, PsbE, PsbF, PsbH, PsbI, PsbJ, PsbK, PsbL, PsbM, PsbT, PsbX, PsbY, PsbZ, Psb30/Ycf12, at least 3 peripheral proteins of the oxygen-evolving complex and a large number of cofactors. It forms dimeric complexes.

It localises to the plastid. Its subcellular location is the chloroplast thylakoid membrane. In terms of biological role, one of the components of the core complex of photosystem II (PSII). PSII is a light-driven water:plastoquinone oxidoreductase that uses light energy to abstract electrons from H(2)O, generating O(2) and a proton gradient subsequently used for ATP formation. It consists of a core antenna complex that captures photons, and an electron transfer chain that converts photonic excitation into a charge separation. This subunit is found at the monomer-monomer interface and is required for correct PSII assembly and/or dimerization. The protein is Photosystem II reaction center protein L of Chlorokybus atmophyticus (Soil alga).